A 152-amino-acid chain; its full sequence is MNFEGKLVGTDLKVAIVVSRFNDFITNRLLDGAKDTLVRHGVEDSNIDVAYVPGAFEIPLVSKKLAQKGEYDAVITLGCVIRGATSHYDYVCNEVAKGVSKANDVSDIPVIFGVLTTESIEQAVERAGTKAGNKGAEAAVSAIEMANLLKQF.

5-amino-6-(D-ribitylamino)uracil-binding positions include Phe-21, Ala-55–Glu-57, and Cys-79–Ile-81. Ala-84 to Thr-85 is a binding site for (2S)-2-hydroxy-3-oxobutyl phosphate. The active-site Proton donor is His-87. Phe-112 lines the 5-amino-6-(D-ribitylamino)uracil pocket. Arg-126 is a binding site for (2S)-2-hydroxy-3-oxobutyl phosphate.

It belongs to the DMRL synthase family. Forms an icosahedral capsid composed of 60 subunits, arranged as a dodecamer of pentamers.

It catalyses the reaction (2S)-2-hydroxy-3-oxobutyl phosphate + 5-amino-6-(D-ribitylamino)uracil = 6,7-dimethyl-8-(1-D-ribityl)lumazine + phosphate + 2 H2O + H(+). It participates in cofactor biosynthesis; riboflavin biosynthesis; riboflavin from 2-hydroxy-3-oxobutyl phosphate and 5-amino-6-(D-ribitylamino)uracil: step 1/2. Catalyzes the formation of 6,7-dimethyl-8-ribityllumazine by condensation of 5-amino-6-(D-ribitylamino)uracil with 3,4-dihydroxy-2-butanone 4-phosphate. This is the penultimate step in the biosynthesis of riboflavin. The chain is 6,7-dimethyl-8-ribityllumazine synthase from Staphylococcus haemolyticus (strain JCSC1435).